The chain runs to 476 residues: ATP synthase subunit beta (476 aa).

152–159 (GGAGVGKT) lines the ATP pocket.

Belongs to the ATPase alpha/beta chains family. In terms of assembly, F-type ATPases have 2 components, CF(1) - the catalytic core - and CF(0) - the membrane proton channel. CF(1) has five subunits: alpha(3), beta(3), gamma(1), delta(1), epsilon(1). CF(0) has three main subunits: a(1), b(2) and c(9-12). The alpha and beta chains form an alternating ring which encloses part of the gamma chain. CF(1) is attached to CF(0) by a central stalk formed by the gamma and epsilon chains, while a peripheral stalk is formed by the delta and b chains.

It localises to the cell inner membrane. It carries out the reaction ATP + H2O + 4 H(+)(in) = ADP + phosphate + 5 H(+)(out). In terms of biological role, produces ATP from ADP in the presence of a proton gradient across the membrane. The catalytic sites are hosted primarily by the beta subunits. This is ATP synthase subunit beta from Acidiphilium cryptum (strain JF-5).